Reading from the N-terminus, the 78-residue chain is uncharacterized protein (78 aa).

A disordered region spans residues 1–28; sequence MQANHSVSYLYESSTSKRSNGLFSQTQK.

This is an uncharacterized protein from Saccharomyces cerevisiae (strain ATCC 204508 / S288c) (Baker's yeast).